Reading from the N-terminus, the 274-residue chain is Large ribosomal subunit protein uL2 (274 aa).

2 disordered regions span residues 30–54 and 223–274; these read EKSL…IRHK and VAMN…QLKG. The segment covering 36-48 has biased composition (low complexity); that stretch reads GKKSSGGRNNNGR. Positions 263–274 are enriched in basic and acidic residues; that stretch reads KFSDKYIKQLKG.

It belongs to the universal ribosomal protein uL2 family. As to quaternary structure, part of the 50S ribosomal subunit. Forms a bridge to the 30S subunit in the 70S ribosome.

Functionally, one of the primary rRNA binding proteins. Required for association of the 30S and 50S subunits to form the 70S ribosome, for tRNA binding and peptide bond formation. It has been suggested to have peptidyltransferase activity; this is somewhat controversial. Makes several contacts with the 16S rRNA in the 70S ribosome. This Wolbachia sp. subsp. Brugia malayi (strain TRS) protein is Large ribosomal subunit protein uL2.